A 439-amino-acid polypeptide reads, in one-letter code: AT-hook motif nuclear-localized protein 13 (439 aa).

Disordered regions lie at residues 1–46 (MDSR…NSYN), 69–216 (QRLP…LGGT), and 342–439 (GRKQ…NSPQ). 2 stretches are compositionally biased toward low complexity: residues 9–31 (QQQQ…QQQQ) and 79–95 (PHQP…PQQQ). The segment covering 109–120 (SPSSVAATQQHS) has biased composition (polar residues). The segment covering 130–139 (VKKKRGRPRK) has biased composition (basic residues). A Bipartite nuclear localization signal motif is present at residues 131-139 (KKKRGRPRK). The a.T hook 1 DNA-binding region spans 131–143 (KKKRGRPRKYAAD). 2 stretches are compositionally biased toward gly residues: residues 143–152 (DGGGGGGGGS) and 171–183 (YGGG…GGDS). Residues 196 to 208 (KRNRGRPPGSGKK) constitute a DNA-binding region (a.T hook 2). The region spanning 217–359 (GGVGFTPHVI…GRAQNTPEPA (143 aa)) is the PPC domain. Residues 347-357 (QSAGRAQNTPE) are compositionally biased toward polar residues. 2 stretches are compositionally biased toward low complexity: residues 376 to 386 (SPRSQGQQHSS) and 403 to 416 (NNNN…FGNS). Residues 428–439 (MYQNLWPGNSPQ) are compositionally biased toward polar residues.

The protein resides in the nucleus. Its function is as follows. Transcription factor that specifically binds AT-rich DNA sequences related to the nuclear matrix attachment regions (MARs). This is AT-hook motif nuclear-localized protein 13 from Arabidopsis thaliana (Mouse-ear cress).